A 34-amino-acid polypeptide reads, in one-letter code: Brevinin-2Rf (34 aa).

A disulfide bridge connects residues Cys28 and Cys34.

As to expression, expressed by the skin glands.

The protein resides in the secreted. Functionally, antimicrobial peptide. This is Brevinin-2Rf from Pelophylax ridibundus (Marsh frog).